Here is a 74-residue protein sequence, read N- to C-terminus: Protein krueppel (74 aa).

4 consecutive C2H2-type zinc fingers follow at residues 1–4, 10–32, 38–60, and 66–74; these read ERTH, FECPECHKRFTRDHHLKTHMRLH, YHCSHCDRQFVQVANLRRHLRVH, and YTCEICDGK.

The protein belongs to the krueppel C2H2-type zinc-finger protein family.

Its subcellular location is the nucleus. Functionally, krueppel is a gap class segmentation protein. This Musca domestica (House fly) protein is Protein krueppel (Kr).